A 977-amino-acid chain; its full sequence is Short transient receptor potential channel 4 (977 aa).

Residues 1–324 (MAQFYYKRNV…YDEFPGWRRR (324 aa)) are Cytoplasmic-facing. ANK repeat units lie at residues 29-60 (LSPSEKAYLNAVEKGDYASVKKSLEEAEIYFK), 71-93 (RTALLIAIENENLELIELLLSFN), 96-118 (VGDALLHAIRKEVVGAVELLLNH), and 141-165 (PDITPIILAAHTNNYEIIKLLVQKG). Zn(2+) contacts are provided by His172, Cys176, Cys178, and Cys181. Residues 223–260 (LSWELQELSKVENEFKSEYEELSRQCKQFAKDLLDQTR) adopt a coiled-coil conformation. An intramembrane region (discontinuously helical) is located at residues 325-359 (HWAVKMVTCFIIGLLFPVFSVCYLIAPKSPLGLFI). Residues 360–362 (RKP) are Cytoplasmic-facing. The helical transmembrane segment at 363 to 383 (FIKFICHTASYLTFLFLLLLA) threads the bilayer. Topologically, residues 384-403 (SQHIDRSDLNRQGPPPTIVE) are extracellular. A helical membrane pass occupies residues 404-418 (WMILPWVLGFIWGEI). 4 residues coordinate Ca(2+): Glu417, Gln420, Asn435, and Asp438. The Cytoplasmic portion of the chain corresponds to 419–432 (KQMWDGGLQDYIHD). Residues 433 to 453 (WWNLMDFVMNSLYLATISLKI) traverse the membrane as a helical segment. The Extracellular segment spans residues 454-475 (VAFVKYSALNPRESWDMWHPTL). Residues 476 to 498 (VAEALFAIANIFSSLRLISLFTA) form a helical membrane-spanning segment. Residues 499 to 511 (NSHLGPLQISLGR) lie on the Cytoplasmic side of the membrane. The helical transmembrane segment at 512 to 534 (MLLDILKFLFIYCLVLLAFANGL) threads the bilayer. At 535–599 (NQLYFYYEET…HEFTEFVGAT (65 aa)) the chain is on the extracellular side. An intrachain disulfide couples Cys549 to Cys554. The chain crosses the membrane as a helical span at residues 600–620 (MFGTYNVISLVVLLNMLIAMM). Positions 615–977 (MLIAMMNNSY…THEDYVTTRL (363 aa)) are interaction with ITPR1, ITPR2 and ITPR3. Topologically, residues 621 to 977 (NNSYQLIADH…THEDYVTTRL (357 aa)) are cytoplasmic. A disordered region spans residues 762–790 (IQSANASKESSNSADSDEKSDSEGNSKDK). A compositionally biased stretch (low complexity) spans 764 to 775 (SANASKESSNSA). A compositionally biased stretch (basic and acidic residues) spans 777-788 (SDEKSDSEGNSK). Tyr959 and Tyr972 each carry phosphotyrosine; by FYN. The tract at residues 975 to 977 (TRL) is PDZ-binding domain.

It belongs to the transient receptor (TC 1.A.4) family. STrpC subfamily. TRPC4 sub-subfamily. In terms of assembly, homotetramer. Heterotetramer with TRPC1 and/or TRPC5. Forms a heteromeric ion channel with TRPC1, with a 1:3 TRPC1:TRPC4 stoichiometry. Interacts with TRPC4AP. Isoform alpha but not isoform beta interacts with ITPR1, ITPR2 and ITPR3. Interacts with (via PDZ-binding domain) with NHERF1. Interacts with MX1 and RNF24. Interacts (via CIRB domain) with SESTD1 (via spectrin 1 repeat). Interacts with CDH5 and CTNNB1. Interacts with SPTAN1 (via C-terminal spectrin repeats) and SPTBN5 (via C-terminus). Interacts (via protein 4.1-binding domain) with EPB41L2. Interacts with PLSCR1. Phosphorylation modulates TRPC channel function by regulating the level of TRPC4 at the cell surface and by increasing the association with NHERF1. As to expression, strongly expressed in placenta. Expressed at lower levels in heart, pancreas, kidney and brain. Expressed in endothelial cells. Isoform alpha was found to be the predominant isoform. Isoform beta was not found in pancreas and brain.

It localises to the cell membrane. It catalyses the reaction Ca(2+)(in) = Ca(2+)(out). The enzyme catalyses Na(+)(in) = Na(+)(out). The catalysed reaction is Li(+)(in) = Li(+)(out). It carries out the reaction Cs(+)(in) = Cs(+)(out). May be operated by a phosphatidylinositol second messenger system activated by receptor tyrosine kinases or G-protein coupled receptors. May be activated by intracellular calcium store depletion. Inhibited by xanthine-based inhibitor Pico145. Functionally, forms a receptor-activated non-selective calcium permeant cation channel. Acts as a cell-cell contact-dependent endothelial calcium entry channel. Forms a homomeric ion channel or a heteromeric ion channel with TRPC1; the heteromeric ion channel has reduced calcium permeability compared to the homomeric channel. Also permeable to monovalent ions including sodium, lithium and cesium ions. Forms a receptor-activated non-selective calcium permeant cation channel. The polypeptide is Short transient receptor potential channel 4 (TRPC4) (Homo sapiens (Human)).